Here is a 274-residue protein sequence, read N- to C-terminus: Formamidopyrimidine-DNA glycosylase (274 aa).

Residue P2 is the Schiff-base intermediate with DNA of the active site. E3 functions as the Proton donor in the catalytic mechanism. Residue K58 is the Proton donor; for beta-elimination activity of the active site. 3 residues coordinate DNA: H91, R110, and K152. The FPG-type zinc-finger motif lies at 237–271 (KVYGRKNLPCLVCENKIETVVIAGRHSAFCPHCQP). R261 acts as the Proton donor; for delta-elimination activity in catalysis.

This sequence belongs to the FPG family. In terms of assembly, monomer. Zn(2+) serves as cofactor.

It catalyses the reaction Hydrolysis of DNA containing ring-opened 7-methylguanine residues, releasing 2,6-diamino-4-hydroxy-5-(N-methyl)formamidopyrimidine.. It carries out the reaction 2'-deoxyribonucleotide-(2'-deoxyribose 5'-phosphate)-2'-deoxyribonucleotide-DNA = a 3'-end 2'-deoxyribonucleotide-(2,3-dehydro-2,3-deoxyribose 5'-phosphate)-DNA + a 5'-end 5'-phospho-2'-deoxyribonucleoside-DNA + H(+). Functionally, involved in base excision repair of DNA damaged by oxidation or by mutagenic agents. Acts as a DNA glycosylase that recognizes and removes damaged bases. Has a preference for oxidized purines, such as 7,8-dihydro-8-oxoguanine (8-oxoG). Has AP (apurinic/apyrimidinic) lyase activity and introduces nicks in the DNA strand. Cleaves the DNA backbone by beta-delta elimination to generate a single-strand break at the site of the removed base with both 3'- and 5'-phosphates. The polypeptide is Formamidopyrimidine-DNA glycosylase (Legionella pneumophila (strain Lens)).